The primary structure comprises 101 residues: Small ribosomal subunit protein uS14 (101 aa).

The protein belongs to the universal ribosomal protein uS14 family. As to quaternary structure, part of the 30S ribosomal subunit. Contacts proteins S3 and S10.

In terms of biological role, binds 16S rRNA, required for the assembly of 30S particles and may also be responsible for determining the conformation of the 16S rRNA at the A site. The chain is Small ribosomal subunit protein uS14 from Xylella fastidiosa (strain M23).